The chain runs to 520 residues: Cytochrome P450 84A1 (520 aa).

An N-acetylmethionine modification is found at Met-1. The chain crosses the membrane as a helical span at residues 12–32; sequence LSDPTTSLVIVVSLFIFISFI. Residue Cys-458 participates in heme binding.

It belongs to the cytochrome P450 family. Requires heme as cofactor.

Its subcellular location is the membrane. The protein operates within aromatic compound metabolism; phenylpropanoid biosynthesis. The polypeptide is Cytochrome P450 84A1 (CYP84A1) (Arabidopsis thaliana (Mouse-ear cress)).